An 815-amino-acid polypeptide reads, in one-letter code: Leucine--tRNA ligase (815 aa).

A 'HIGH' region motif is present at residues 42–52 (PYPSGRLHMGH). Positions 574–578 (KMSKS) match the 'KMSKS' region motif. An ATP-binding site is contributed by lysine 577.

It belongs to the class-I aminoacyl-tRNA synthetase family.

The protein resides in the cytoplasm. The catalysed reaction is tRNA(Leu) + L-leucine + ATP = L-leucyl-tRNA(Leu) + AMP + diphosphate. In Alcanivorax borkumensis (strain ATCC 700651 / DSM 11573 / NCIMB 13689 / SK2), this protein is Leucine--tRNA ligase.